Here is a 156-residue protein sequence, read N- to C-terminus: Small ribosomal subunit protein uS7 (156 aa).

The protein belongs to the universal ribosomal protein uS7 family. As to quaternary structure, part of the 30S ribosomal subunit. Contacts proteins S9 and S11.

One of the primary rRNA binding proteins, it binds directly to 16S rRNA where it nucleates assembly of the head domain of the 30S subunit. Is located at the subunit interface close to the decoding center, probably blocks exit of the E-site tRNA. The sequence is that of Small ribosomal subunit protein uS7 from Lactobacillus delbrueckii subsp. bulgaricus (strain ATCC 11842 / DSM 20081 / BCRC 10696 / JCM 1002 / NBRC 13953 / NCIMB 11778 / NCTC 12712 / WDCM 00102 / Lb 14).